The chain runs to 65 residues: Alpha-toxin Bs-Tx28 (65 aa).

An LCN-type CS-alpha/beta domain is found at 3–65 (RDAYIADDKN…VPIRIPGKCR (63 aa)). Disulfide bonds link Cys13–Cys64, Cys17–Cys37, Cys23–Cys47, and Cys27–Cys49. Arg65 is subject to Arginine amide.

It belongs to the long (4 C-C) scorpion toxin superfamily. Sodium channel inhibitor family. Alpha subfamily. Expressed by the venom gland.

It is found in the secreted. Functionally, alpha toxins bind voltage-independently at site-3 of sodium channels (Nav) and inhibit the inactivation of the activated channels, thereby blocking neuronal transmission. This toxin inhibits the inactivation of activated TTX-sensitive sodium channels (Nav). The polypeptide is Alpha-toxin Bs-Tx28 (Hottentotta tamulus sindicus (Scorpion)).